Consider the following 608-residue polypeptide: Alpha-1,3-galactosidase A (608 aa).

A signal peptide spans 1–21 (MQRRTFIKSISAMMATSTTLG). Cys22 carries N-palmitoyl cysteine lipidation. Residue Cys22 is the site of S-diacylglycerol cysteine attachment. PbH1 repeat units lie at residues 262–292 (TKNT…KLDN), 318–340 (KGHV…NVHG), 426–448 (PDHV…LLTV), 449–470 (SGKI…KIGS), and 481–507 (VESV…DIVP).

This sequence belongs to the glycosyl hydrolase 110 family. A subfamily.

The protein localises to the cell membrane. The enzyme catalyses Hydrolysis of terminal, non-reducing branched (1-&gt;3)-alpha-D-galactosidic residues, producing free D-galactose.. The catalysed reaction is Hydrolysis of terminal, non-reducing alpha-D-galactose residues in alpha-D-galactosides, including galactose oligosaccharides, galactomannans and galactolipids.. Alpha-galactosidase that specifically removes branched alpha-1,3-linked galactose residues present in blood group B antigens. Has no activity toward linear alpha-1,3-linked galactose residues. This Shewanella woodyi (strain ATCC 51908 / MS32) protein is Alpha-1,3-galactosidase A (glaA).